The primary structure comprises 63 residues: Mu-like prophage FluMu protein gp38 (63 aa).

To phage Mu protein gp38.

This Haemophilus influenzae (strain ATCC 51907 / DSM 11121 / KW20 / Rd) protein is Mu-like prophage FluMu protein gp38.